We begin with the raw amino-acid sequence, 430 residues long: Enolase (430 aa).

Q165 is a binding site for (2R)-2-phosphoglycerate. E207 (proton donor) is an active-site residue. The Mg(2+) site is built by D244, E287, and D314. (2R)-2-phosphoglycerate is bound by residues K339, R368, S369, and K390. K339 (proton acceptor) is an active-site residue.

This sequence belongs to the enolase family. As to quaternary structure, component of the RNA degradosome, a multiprotein complex involved in RNA processing and mRNA degradation. It depends on Mg(2+) as a cofactor.

The protein localises to the cytoplasm. Its subcellular location is the secreted. It is found in the cell surface. It catalyses the reaction (2R)-2-phosphoglycerate = phosphoenolpyruvate + H2O. The protein operates within carbohydrate degradation; glycolysis; pyruvate from D-glyceraldehyde 3-phosphate: step 4/5. Functionally, catalyzes the reversible conversion of 2-phosphoglycerate (2-PG) into phosphoenolpyruvate (PEP). It is essential for the degradation of carbohydrates via glycolysis. This Stenotrophomonas maltophilia (strain R551-3) protein is Enolase.